A 551-amino-acid chain; its full sequence is Arginine--tRNA ligase (551 aa).

The 'HIGH' region signature appears at Ala-123–Arg-133.

Belongs to the class-I aminoacyl-tRNA synthetase family. As to quaternary structure, monomer.

Its subcellular location is the cytoplasm. It catalyses the reaction tRNA(Arg) + L-arginine + ATP = L-arginyl-tRNA(Arg) + AMP + diphosphate. This Chlorobium limicola (strain DSM 245 / NBRC 103803 / 6330) protein is Arginine--tRNA ligase.